We begin with the raw amino-acid sequence, 481 residues long: Aromatic amino acid aminotransferase DDB_G0272014 (481 aa).

At Lys300 the chain carries N6-(pyridoxal phosphate)lysine.

It belongs to the class-I pyridoxal-phosphate-dependent aminotransferase family. Pyridoxal 5'-phosphate serves as cofactor.

The protein resides in the cytoplasm. It carries out the reaction an aromatic L-alpha-amino acid + 2-oxoglutarate = an aromatic oxo-acid + L-glutamate. Its function is as follows. Has aromatic amino acid transaminase activity. The protein is Aromatic amino acid aminotransferase DDB_G0272014 of Dictyostelium discoideum (Social amoeba).